The primary structure comprises 757 residues: POU domain, class 2, transcription factor 1 (757 aa).

4 disordered regions span residues 1-43 (MKLH…QTNG), 271-295 (AATP…SLEE), 375-398 (SLSN…RRKK), and 532-574 (VSSV…TSPL). 2 stretches are compositionally biased toward polar residues: residues 19-43 (RMNN…QTNG) and 275-285 (VQQLPQSQTTP). The region spanning 294 to 368 (EEPSDLEELE…LLEKWLNDAE (75 aa)) is the POU-specific domain. A DNA-binding region (homeobox) is located at residues 395–454 (RRKKRTSIETNIRVALEKSFLENQKPTSEEITMIADQLNMEKEVIRVWFCNRRQKEKRIN).

It belongs to the POU transcription factor family. Class-2 subfamily.

The protein resides in the cytoplasm. The protein localises to the nucleus. Functionally, transcription factor that binds to the octamer motif (5'-ATTTGCAT-3') and activates the promoters of the genes for some small nuclear RNAs (snRNA) and histone H2B. Acts downstream of Notch signaling during radial glia formation. Regulates apoptosis, possibly via an FGF-signaling pathway. In Xenopus tropicalis (Western clawed frog), this protein is POU domain, class 2, transcription factor 1.